Here is a 561-residue protein sequence, read N- to C-terminus: MFLSTLFLVSLATCVICGNPSSPPVVDTAHGKVLGKHVNVEGFSQPVAVFLGIPFAKPPLGSLRFAPPQPAEPWSSVKNATTYPPMCSQDAARGQAVNDLITNRKEKIHLEFSEDCLYLNIYTPADFSKNSRLPVMVWIHGGGLKLGGASSFDGRALSAYENVVVVAIQYRLSIWGFFSTGDEHSRGNWGHLDQVAALHWVQDNIANFGGDPGSVTIFGESAGGYSVSILILSPLSKNLFHRAISESGVAFIPGMFTKDVRPITEQIAVTAGCKTTTSAVIVHCMRQKTEEELLEIMHKLNLYKLSLQGDTKNSDQFVTSVLDGVVLPKDPKEILAEKNFNTVPYIVGINKQECGWLLPTMTGFLPADVKLDKKKAIALLEQFASMTGIPEDIIPVAVEKYTKGSDDPDQIREGVLDAMGDVAFGVPSVIVSRGHRDTGAPTYMYEYQYYPSFSSPQRPKNVVGDHADDVYSVFGAPILREGASEEEINLSKMVMKFWANFARNGNPNGKGLPHWPKYDQKEGYLHIGGTTQQAQRLKEEEVTFWTQSLAKKQPQPYHNEL.

An N-terminal signal peptide occupies residues 1–17 (MFLSTLFLVSLATCVIC). C87 and C116 are disulfide-bonded. S221 (acyl-ester intermediate) is an active-site residue. The cysteines at positions 273 and 284 are disulfide-linked. Active-site charge relay system residues include E353 and H466. A Prevents secretion from ER motif is present at residues 558–561 (HNEL).

Belongs to the type-B carboxylesterase/lipase family. In terms of tissue distribution, expressed in liver, white and brown adipose tissue, kidney, intestine, adrenal, heart and ovary. Not detected in muscle, lung, testis, brain and spleen.

The protein localises to the lipid droplet. Its subcellular location is the cytoplasm. It is found in the cytosol. It localises to the endoplasmic reticulum. The protein resides in the microsome. The catalysed reaction is a carboxylic ester + H2O = an alcohol + a carboxylate + H(+). It catalyses the reaction all-trans-retinyl hexadecanoate + H2O = all-trans-retinol + hexadecanoate + H(+). Its function is as follows. Involved in the detoxification of xenobiotics and in the activation of ester and amide prodrugs. Hydrolyzes retinyl esters. Hydrolyzes p-nitrophenyl butyrate (PNPB), triacylglycerol and monoacylglycerol. Shows higher activity against PNPB, a short-chain fatty acid ester, than against triolein, a long-chain fatty acid ester. Shows no detectable activity against diacylglycerol, cholesterol ester or phospholipids. May play a role in adipocyte lipolysis. The chain is Carboxylesterase 1F from Mus musculus (Mouse).